The following is a 340-amino-acid chain: MISNFTGRLLLPKFRNKLCAFFSKESTSSNSLAKSKTNSELEGYTGKSNLLEKKKVGVFGTSTVPINTNFPNPKGVIGYDPDFSVKELVAELPNTRKTQGAKLAEEIKDAFSNISIEKPELLEDIGFVRHNEARVEYKFDTSEKLDLWKIGCDSDWKEGFSTCSLVNSDRGTAVFSGNISTRVLKDGRVERAGWASMKLEDRKTFNRKKFLSKWRNFSHLLLKVRGDGRSYKIMLHSPLSMDFTWGDSFSHPLHTHGGPYWQYEKIPFSKFFHTVAGRIQDRQYRVNLEDTSSIGIVLMDRIDGDFKLEIDYIGVYNDTTHVEDFAYETYTLPVFNTHGF.

Belongs to the CIA30 family.

Its subcellular location is the mitochondrion. Chaperone protein involved in the assembly of the mitochondrial NADH:ubiquinone oxidoreductase complex (complex I). Required for normal growth and reproduction. This Caenorhabditis briggsae protein is Probable complex I intermediate-associated protein 30, mitochondrial (nuaf-1).